A 331-amino-acid polypeptide reads, in one-letter code: RNA 3'-terminal phosphate cyclase (331 aa).

Residues glutamine 100 and histidine 276–glutamine 280 each bind ATP. The Tele-AMP-histidine intermediate role is filled by histidine 301.

This sequence belongs to the RNA 3'-terminal cyclase family. Type 1 subfamily.

It localises to the cytoplasm. It carries out the reaction a 3'-end 3'-phospho-ribonucleotide-RNA + ATP = a 3'-end 2',3'-cyclophospho-ribonucleotide-RNA + AMP + diphosphate. Functionally, catalyzes the conversion of 3'-phosphate to a 2',3'-cyclic phosphodiester at the end of RNA. The mechanism of action of the enzyme occurs in 3 steps: (A) adenylation of the enzyme by ATP; (B) transfer of adenylate to an RNA-N3'P to produce RNA-N3'PP5'A; (C) and attack of the adjacent 2'-hydroxyl on the 3'-phosphorus in the diester linkage to produce the cyclic end product. The biological role of this enzyme is unknown but it is likely to function in some aspects of cellular RNA processing. This Methanosarcina barkeri (strain Fusaro / DSM 804) protein is RNA 3'-terminal phosphate cyclase.